A 227-amino-acid chain; its full sequence is Cytidylate kinase (227 aa).

12 to 20 (GPSGAGKGT) contacts ATP.

The protein belongs to the cytidylate kinase family. Type 1 subfamily.

The protein localises to the cytoplasm. The enzyme catalyses CMP + ATP = CDP + ADP. The catalysed reaction is dCMP + ATP = dCDP + ADP. This chain is Cytidylate kinase, found in Escherichia fergusonii (strain ATCC 35469 / DSM 13698 / CCUG 18766 / IAM 14443 / JCM 21226 / LMG 7866 / NBRC 102419 / NCTC 12128 / CDC 0568-73).